The sequence spans 153 residues: Small ribosomal subunit protein uS13 (153 aa).

The protein belongs to the universal ribosomal protein uS13 family. Part of the 30S ribosomal subunit. Forms a loose heterodimer with protein S19. Forms two bridges to the 50S subunit in the 70S ribosome.

Located at the top of the head of the 30S subunit, it contacts several helices of the 16S rRNA. In the 70S ribosome it contacts the 23S rRNA (bridge B1a) and protein L5 of the 50S subunit (bridge B1b), connecting the 2 subunits; these bridges are implicated in subunit movement. The sequence is that of Small ribosomal subunit protein uS13 from Pyrobaculum islandicum (strain DSM 4184 / JCM 9189 / GEO3).